Here is a 396-residue protein sequence, read N- to C-terminus: Elongation factor Tu 2 (396 aa).

Residues 10-206 (KPHCNIGTIG…TVDAYIPQPD (197 aa)) form the tr-type G domain. A G1 region spans residues 19–26 (GHVDHGKT). 19–26 (GHVDHGKT) contacts GTP. Position 26 (threonine 26) interacts with Mg(2+). Residues 60–64 (GITIN) form a G2 region. The G3 stretch occupies residues 81–84 (DCPG). GTP contacts are provided by residues 81-85 (DCPGH) and 136-139 (NKVD). Residues 136–139 (NKVD) form a G4 region. The interval 174–176 (SAK) is G5.

This sequence belongs to the TRAFAC class translation factor GTPase superfamily. Classic translation factor GTPase family. EF-Tu/EF-1A subfamily. Monomer.

The protein resides in the cytoplasm. The catalysed reaction is GTP + H2O = GDP + phosphate + H(+). GTP hydrolase that promotes the GTP-dependent binding of aminoacyl-tRNA to the A-site of ribosomes during protein biosynthesis. The polypeptide is Elongation factor Tu 2 (Caulobacter sp. (strain K31)).